The following is a 426-amino-acid chain: Histidine--tRNA ligase (426 aa).

The protein belongs to the class-II aminoacyl-tRNA synthetase family. As to quaternary structure, homodimer.

The protein localises to the cytoplasm. The enzyme catalyses tRNA(His) + L-histidine + ATP = L-histidyl-tRNA(His) + AMP + diphosphate + H(+). This is Histidine--tRNA ligase from Streptococcus pyogenes serotype M1.